A 199-amino-acid chain; its full sequence is 7-methyl-GTP pyrophosphatase (199 aa).

Aspartate 73 functions as the Proton acceptor in the catalytic mechanism.

The protein belongs to the Maf family. YceF subfamily. A divalent metal cation is required as a cofactor.

The protein resides in the cytoplasm. It catalyses the reaction N(7)-methyl-GTP + H2O = N(7)-methyl-GMP + diphosphate + H(+). Nucleoside triphosphate pyrophosphatase that hydrolyzes 7-methyl-GTP (m(7)GTP). May have a dual role in cell division arrest and in preventing the incorporation of modified nucleotides into cellular nucleic acids. The polypeptide is 7-methyl-GTP pyrophosphatase (Bordetella bronchiseptica (strain ATCC BAA-588 / NCTC 13252 / RB50) (Alcaligenes bronchisepticus)).